An 806-amino-acid polypeptide reads, in one-letter code: NADH:(hydroxy)cinnamate reductase subunit CrdB (806 aa).

FMN phosphoryl serine is present on S257. Residues A310, E329, N337, T338, G342, G343, and D576 each coordinate FAD. The Proton donor role is filled by R635. Residues H742, E771, A786, and L787 each contribute to the FAD site.

It belongs to the FAD-dependent oxidoreductase 2 family. FRD/SDH subfamily. As to quaternary structure, NADH:(hydroxy)cinnamate reductase Crd is a heterodimer composed of CrdA and CrdB subunits, encoded by adjacent genes. Requires FAD as cofactor. FMN serves as cofactor. In terms of processing, is flavinylated on Ser-257 by ApbE, encoded in a neighboring gene. Covalent attachment of FMN is essential for catalytic activity.

The catalysed reaction is 3-phenylpropanoate + NAD(+) = (E)-cinnamate + NADH + H(+). It carries out the reaction 3-(3,4-dihydroxyphenyl)propanoate + NAD(+) = (E)-caffeate + NADH + H(+). It catalyses the reaction phloretate + NAD(+) = (E)-4-coumarate + NADH + H(+). The enzyme catalyses dihydroferulate + NAD(+) = (E)-ferulate + NADH + H(+). With respect to regulation, is inactivated by molecular oxygen, allowing regulation of Crd activity by medium oxygen level. Functionally, component of the NADH:(hydroxy)cinnamate reductase Crd that catalyzes the reduction of the double bond in cinnamate, p-coumarate, caffeate, and ferulate under anaerobic conditions with NADH or methyl viologen as the electron donor. Is moderately active against acrylate and practically inactive against urocanate, fumarate, methacrylate and crotonate. CrdB is the catalytic subunit that binds substrates. Is likely involved in protecting V.ruber from (hydroxy)cinnamate poisoning. The protein is NADH:(hydroxy)cinnamate reductase subunit CrdB of Vibrio ruber (strain DSM 16370 / JCM 11486 / BCRC 17186 / CECT 7878 / LMG 23124 / VR1).